The following is a 91-amino-acid chain: Small ribosomal subunit protein bS20 (91 aa).

The segment at 1-25 is disordered; the sequence is MANSPSAKKRAKQAEKRRSHNASLR. Residues 7–20 show a composition bias toward basic residues; the sequence is AKKRAKQAEKRRSH.

It belongs to the bacterial ribosomal protein bS20 family.

Its function is as follows. Binds directly to 16S ribosomal RNA. This Azotobacter vinelandii (strain DJ / ATCC BAA-1303) protein is Small ribosomal subunit protein bS20.